The sequence spans 483 residues: tRNA-2-methylthio-N(6)-dimethylallyladenosine synthase (483 aa).

One can recognise an MTTase N-terminal domain in the interval 31–148; that stretch reads KKLYIETQGC…LPQMLDQHHA (118 aa). The [4Fe-4S] cluster site is built by cysteine 40, cysteine 77, cysteine 111, cysteine 192, cysteine 196, and cysteine 199. The Radical SAM core domain maps to 178-410; the sequence is RVEGFKAFVS…QQVIKQSSIE (233 aa). Residues 413–477 enclose the TRAM domain; sequence DAMLGKIERV…LNLVYGELLN (65 aa).

The protein belongs to the methylthiotransferase family. MiaB subfamily. Monomer. The cofactor is [4Fe-4S] cluster.

The protein localises to the cytoplasm. The catalysed reaction is N(6)-dimethylallyladenosine(37) in tRNA + (sulfur carrier)-SH + AH2 + 2 S-adenosyl-L-methionine = 2-methylsulfanyl-N(6)-dimethylallyladenosine(37) in tRNA + (sulfur carrier)-H + 5'-deoxyadenosine + L-methionine + A + S-adenosyl-L-homocysteine + 2 H(+). Catalyzes the methylthiolation of N6-(dimethylallyl)adenosine (i(6)A), leading to the formation of 2-methylthio-N6-(dimethylallyl)adenosine (ms(2)i(6)A) at position 37 in tRNAs that read codons beginning with uridine. In Acinetobacter baumannii (strain AB0057), this protein is tRNA-2-methylthio-N(6)-dimethylallyladenosine synthase.